We begin with the raw amino-acid sequence, 274 residues long: 16S rRNA (guanine(1405)-N(7))-methyltransferase (274 aa).

Residues Phe-64, 102–104 (HVS), Arg-108, Ala-133, Asp-156, 182–183 (DL), Leu-198, and Gln-207 contribute to the S-adenosyl-L-methionine site.

The protein belongs to the methyltransferase superfamily. Aminoglycoside resistance family.

The catalysed reaction is guanosine(1405) in 16S rRNA + S-adenosyl-L-methionine = N(7)-methylguanosine(1405) in 16S rRNA + S-adenosyl-L-homocysteine. In terms of biological role, specifically methylates the N(7) position of guanine 1405 in 16S rRNA. Confers resistance to various aminoglycosides, including gentamicin and kanamycin. The polypeptide is 16S rRNA (guanine(1405)-N(7))-methyltransferase (grm) (Micromonospora echinospora (Micromonospora purpurea)).